The sequence spans 346 residues: Probable disease resistance protein At5g45440 (346 aa).

One can recognise an NB-ARC domain in the interval K38–M116. G85–T92 lines the ATP pocket. Residues F315 to L346 form a disordered region.

Functionally, possible disease resistance protein. In Arabidopsis thaliana (Mouse-ear cress), this protein is Probable disease resistance protein At5g45440.